Reading from the N-terminus, the 456-residue chain is MITPLAKTAPAPRYLYVRTFGCQMNEYDSQRALRLLCAVGYRPTSDIADADVIFLNTCSVRDKAEQKVYSFLGRLRRLKAHRPWLKIVVAGCVAQQLGDGLLKRFEHVDLVVGTRGIGSIASLLEEVERSKRRVAHLPAEELQGFTTDKCRTVGTGDVVAQVTIMQGCNNFCTYCIVPHVRGRERSRAPDDILREIDFLASRGAREVLLLGQNVNSYGRGLPDPISFPDLLRRIGKETSIRRVRFTTSHPKDLTEDLIECFAGLPFLCKHLHLPFQSGSDGILKLMHRGYTARQYLEKIARLREVCPEIALSTDVIVGFPAESEEDYLQTLRLIEEVRFDSLFSFRYSDRPLTRAAGFPDKVPMDVKVRRLARLQSIQADITLQKNLAETGTVREVLVEGPSKASNGQMTGRTQQNRIINFQCPVDLTGKIVPVRIVAAYSHSLKGELLSQPGKES.

An MTTase N-terminal domain is found at 13 to 129 (RYLYVRTFGC…IASLLEEVER (117 aa)). Cysteine 22, cysteine 58, cysteine 92, cysteine 168, cysteine 172, and cysteine 175 together coordinate [4Fe-4S] cluster. The Radical SAM core domain occupies 154–384 (GTGDVVAQVT…QSIQADITLQ (231 aa)). Positions 387–450 (LAETGTVREV…SHSLKGELLS (64 aa)) constitute a TRAM domain.

The protein belongs to the methylthiotransferase family. MiaB subfamily. As to quaternary structure, monomer. [4Fe-4S] cluster is required as a cofactor.

The protein resides in the cytoplasm. It carries out the reaction N(6)-dimethylallyladenosine(37) in tRNA + (sulfur carrier)-SH + AH2 + 2 S-adenosyl-L-methionine = 2-methylsulfanyl-N(6)-dimethylallyladenosine(37) in tRNA + (sulfur carrier)-H + 5'-deoxyadenosine + L-methionine + A + S-adenosyl-L-homocysteine + 2 H(+). Its function is as follows. Catalyzes the methylthiolation of N6-(dimethylallyl)adenosine (i(6)A), leading to the formation of 2-methylthio-N6-(dimethylallyl)adenosine (ms(2)i(6)A) at position 37 in tRNAs that read codons beginning with uridine. This chain is tRNA-2-methylthio-N(6)-dimethylallyladenosine synthase, found in Syntrophobacter fumaroxidans (strain DSM 10017 / MPOB).